The following is an 810-amino-acid chain: S-adenosyl-L-methionine-dependent tRNA 4-demethylwyosine synthase (810 aa).

2 disordered regions span residues 86–116 (NGGG…KGGC) and 156–176 (RSST…VGKK). Residues 104–116 (GCCSSKGGKKGGC) are compositionally biased toward low complexity. Residues 159-172 (TPKVFSKNSSSNSR) are compositionally biased toward polar residues. A Flavodoxin-like domain is found at 205-360 (IYVLYSSLQG…KIDEWTSLLA (156 aa)). FMN-binding positions include 211 to 215 (SLQGA) and 304 to 337 (VLGL…RRIF). Residues 374-397 (DENADSEEDEEEGNGSDELGDVED) are compositionally biased toward acidic residues. Positions 374–407 (DENADSEEDEEEGNGSDELGDVEDIGGKGSNGKF) are disordered. In terms of domain architecture, Radical SAM core spans 463–713 (FNIASSRCME…ELQRRGLHYD (251 aa)). Residues Cys-479, Cys-483, and Cys-486 each contribute to the [4Fe-4S] cluster site. Lys-496 participates in a covalent cross-link: Glycyl lysine isopeptide (Lys-Gly) (interchain with G-Cter in ubiquitin). The disordered stretch occupies residues 782 to 810 (RVYRKDKKKQNKENQETTTRETPLPPIPA).

The protein belongs to the TYW1 family. Requires [4Fe-4S] cluster as cofactor.

The protein localises to the endoplasmic reticulum. The catalysed reaction is N(1)-methylguanosine(37) in tRNA(Phe) + pyruvate + S-adenosyl-L-methionine = 4-demethylwyosine(37) in tRNA(Phe) + 5'-deoxyadenosine + L-methionine + CO2 + H2O. It functions in the pathway tRNA modification; wybutosine-tRNA(Phe) biosynthesis. Its function is as follows. Component of the wybutosine biosynthesis pathway. Wybutosine is a hyper modified guanosine with a tricyclic base found at the 3'-position adjacent to the anticodon of eukaryotic phenylalanine tRNA. Catalyzes the condensation of N-methylguanine with 2 carbon atoms from pyruvate to form the tricyclic 4-demethylwyosine, an intermediate in wybutosine biosynthesis. The polypeptide is S-adenosyl-L-methionine-dependent tRNA 4-demethylwyosine synthase (TYW1) (Saccharomyces cerevisiae (strain ATCC 204508 / S288c) (Baker's yeast)).